A 276-amino-acid chain; its full sequence is Large ribosomal subunit protein uL2 (276 aa).

Residues 212–276 (NRHRGIRPQT…KLIISRKKHK (65 aa)) are disordered. Basic residues predominate over residues 257–276 (YKTRKKKASDKLIISRKKHK).

It belongs to the universal ribosomal protein uL2 family. In terms of assembly, part of the 50S ribosomal subunit. Forms a bridge to the 30S subunit in the 70S ribosome.

Functionally, one of the primary rRNA binding proteins. Required for association of the 30S and 50S subunits to form the 70S ribosome, for tRNA binding and peptide bond formation. It has been suggested to have peptidyltransferase activity; this is somewhat controversial. Makes several contacts with the 16S rRNA in the 70S ribosome. The protein is Large ribosomal subunit protein uL2 of Helicobacter pylori (strain HPAG1).